We begin with the raw amino-acid sequence, 439 residues long: MGVANDSSPEYQWMSPHRLSDTVILGDCLYFNNIMSQLDLHQNWAPPVRLLNYFKNFNKETLLKIEENDYINSSFFQQKDKRFYPINDDFYHISTGGYGIVFKIDNYVVKFVFEATKLYSPMETTAEFTVPKFLYNNLKGDEKKLIVCAWAMGLNYKLTFLHTLYKRVLHMLLLLIQTMDGQELSLRYSSKVFLKAFNERKDSIKFVKLLSHFYPAVINSNINVINYFNRMFHFFEHEKRTNYEYERGNIIIFPLALYSADKVDTELAIKLGFKSLVQYIKFIFLQMALLYIKIYELPCCDNFLHADLKPDNILLFDSNEPIIIHLKDKKFVFNERIKSALNDFDFSQVAGIINKKIKNNFKVKHNWYYDFHFFVHTLLKTYPEIEKDIEFSTALEEFIMCTKTDCDKYRLKVSILHPISFLEKFIMRDIFSDWINGGN.

The 353-residue stretch at 87–439 folds into the Protein kinase domain; the sequence is NDDFYHISTG…IFSDWINGGN (353 aa). Residues 93 to 101 and Lys-117 contribute to the ATP site; that span reads ISTGGYGIV. The active-site Proton acceptor is the Asp-307.

The protein belongs to the protein kinase superfamily. Ser/Thr protein kinase family. Post-translationally, phosphorylated in vivo. Autophosphorylated in vitro.

The protein localises to the host endoplasmic reticulum. Its subcellular location is the host endoplasmic reticulum-Golgi intermediate compartment. It carries out the reaction L-seryl-[protein] + ATP = O-phospho-L-seryl-[protein] + ADP + H(+). The catalysed reaction is L-threonyl-[protein] + ATP = O-phospho-L-threonyl-[protein] + ADP + H(+). Its function is as follows. Essential serine-protein kinase involved in the early stage of virion morphogenesis. This chain is Serine/threonine-protein kinase 2 (OPG054), found in Vaccinia virus (strain Tian Tan) (VACV).